Reading from the N-terminus, the 316-residue chain is MGAVHGVCYGMVGDNLPSRSDVVQLYKSRNIHAMRIYNPDQEALTALRGSGIFLILDVGGVDEVRRLGRDPSYAAGWVRSNVQAYYPDVLIRYIAVGNEVPAGDTGIILLAMQNVHNALASANLSSSIKVSTAVRFDVITNSFPPSSGVFRDPSGLVPIARFLDSTGAPFLANVYPYFAYRDDRGQNIRLNYATLQPGTTVRDNGNGLTYTSLFDAMVDSIYAALEKAGTPNVRVVVSESGWPSAGGFGASVENARNYNQGLIDHIRSGTPKRPGAIETYIFAMFNENRKPGDEVERNFGLFFPNKQPVYPTTFPN.

The Proton donor role is filled by Glu-99. Glu-239 (nucleophile) is an active-site residue.

This sequence belongs to the glycosyl hydrolase 17 family.

It is found in the cytoplasm. It catalyses the reaction Hydrolysis of (1-&gt;3)-beta-D-glucosidic linkages in (1-&gt;3)-beta-D-glucans.. May provide a degree of protection against microbial invasion of germinated barley grain through its ability to degrade fungal cell wall polysaccharides. The protein is Glucan endo-1,3-beta-glucosidase GV of Hordeum vulgare (Barley).